We begin with the raw amino-acid sequence, 208 residues long: Small ribosomal subunit protein eS1 (208 aa).

Belongs to the eukaryotic ribosomal protein eS1 family.

This Saccharolobus solfataricus (strain ATCC 35092 / DSM 1617 / JCM 11322 / P2) (Sulfolobus solfataricus) protein is Small ribosomal subunit protein eS1.